The primary structure comprises 196 residues: O-methyltransferase dpmpI (196 aa).

S-adenosyl-L-methionine is bound by residues 127–128 (GG), D152, and 174–175 (SF). A disordered region spans residues 166–196 (NGIEAVPHSFEDPQPIKSKSPRLDNLARERL). Positions 186 to 196 (PRLDNLARERL) are enriched in basic and acidic residues.

It belongs to the class I-like SAM-binding methyltransferase superfamily. Cation-independent O-methyltransferase family.

It participates in secondary metabolite biosynthesis; terpenoid biosynthesis. In terms of biological role, O-methyltransferase; part of the gene cluster that mediates the biosynthesis of diterpenoid pyrones. The first step of the pathway is the synthesis of the alpha-pyrone moiety by the polyketide synthase dpmpA via condensation of one acetyl-CoA starter unit with 3 malonyl-CoA units and 2 methylations. The alpha-pyrone is then combined with geranylgeranyl pyrophosphate (GGPP) formed by the GGPP synthase dpmpD through the action of the prenyltransferase dpmpC to yield a linear alpha-pyrone diterpenoid. Subsequent steps in the diterpenoid pyrone biosynthetic pathway involve the decalin core formation, which is initiated by the epoxidation of the C10-C11 olefin by the FAD-dependent oxidoreductase dpmpE, and is followed by a cyclization cascade catalyzed by the terpene cyclase dpmpB. The short chain dehydrogenase/reductase dpmpG then oxidizes the 8S hydroxy group to a ketone and the short chain dehydrogenase/reductase dpmpH reduces the ketone to the 8R hydroxy group to yield higginsianin B. Higginsianin B is further methylated by the methyltransferase dpmpI to produce the intermediate named FDDP B. The cytochrome P450 monooxygenase dpmpJ then oxidizes the C-26 methyl to primary alcohol, producing the final diterpenoid pyrone with a C-26 primary alcohol on the gamma-pyrone moiety named FDDP C. This chain is O-methyltransferase dpmpI, found in Macrophomina phaseolina (strain MS6) (Charcoal rot fungus).